The following is a 1327-amino-acid chain: uncharacterized protein (1327 aa).

884–885 (WD) contributes to the substrate binding site. Residue E1023 is the Proton donor of the active site. 1143 to 1144 (KQ) lines the substrate pocket.

This sequence in the N-terminal section; belongs to the trehalose phosphatase family. It in the C-terminal section; belongs to the glycosyl hydrolase 65 family.

This is an uncharacterized protein from Mycobacterium tuberculosis (strain CDC 1551 / Oshkosh).